A 118-amino-acid polypeptide reads, in one-letter code: MICOS complex subunit MIC13 (118 aa).

The Mitochondrial matrix segment spans residues 1-7 (MVARVWS). The chain crosses the membrane as a helical span at residues 8–26 (LMRFLIKGSVAGGAVYLVY). Over 27 to 118 (DQELLGPSDK…GWEYVKARTK (92 aa)) the chain is Mitochondrial intermembrane.

This sequence belongs to the MICOS complex subunit Mic13 family. As to quaternary structure, component of the mitochondrial contact site and cristae organizing system (MICOS) complex, composed of at least MICOS10/MIC10, CHCHD3/MIC19, CHCHD6/MIC25, APOO/MIC26, MICOS13/MIC13, APOOL/MIC27 and IMMT/MIC60. The MICOS complex associates with mitochondrial outer membrane proteins SAMM50, MTX1 and MTX2 (together described as components of the mitochondrial outer membrane sorting assembly machinery (SAM) complex) and DNAJC11, mitochondrial inner membrane protein TMEM11 and with HSPA9. The MICOS and SAM complexes together with DNAJC11 are part of a large protein complex spanning both membranes termed the mitochondrial intermembrane space bridging (MIB) complex.

The protein resides in the mitochondrion inner membrane. Component of the MICOS complex, a large protein complex of the mitochondrial inner membrane that plays crucial roles in the maintenance of crista junctions, inner membrane architecture, and formation of contact sites to the outer membrane. Constituent of mature MICOS complex, it is required for the formation of cristae junction (CJ) and maintenance of cristae morphology. Required for the incorporation of MICOS10/MIC10 into the MICOS complex. This chain is MICOS complex subunit MIC13, found in Homo sapiens (Human).